The following is a 203-amino-acid chain: Twist-related protein 1 (203 aa).

Low complexity predominate over residues 1–18 (MMQDVSSSPVSPADDSLS). Positions 1–105 (MMQDVSSSPV…SGGGSPQSYE (105 aa)) are disordered. The segment covering 34 to 43 (RGGRKRRSSR) has biased composition (basic residues). Composition is skewed to gly residues over residues 46–65 (AGGG…GGDE) and 80–100 (GCGG…GGGS). One can recognise a bHLH domain in the interval 109 to 160 (TQRVMANVRGRQRTQSLNEAFAALRKIIPTLPSDKLSKIQTLKLAARYIDFL). Residues 162–192 (QVLQSDELDSKMASCSYVAHERLSYAFSVWR) form a sufficient for transactivation activity region.

In terms of assembly, efficient DNA binding requires dimerization with another bHLH protein. Homodimer or heterodimer with E proteins such as TCF3. ID1 binds preferentially to TCF3 but does not interact efficiently with TWIST1 so ID1 levels control the amount of TCF3 available to dimerize with TWIST and thus determine the type of dimer formed.

The protein localises to the nucleus. Its function is as follows. Acts as a transcriptional regulator. Inhibits myogenesis by sequestrating E proteins, inhibiting trans-activation by MEF2, and inhibiting DNA-binding by MYOD1 through physical interaction. This interaction probably involves the basic domains of both proteins. Also represses expression of pro-inflammatory cytokines such as TNFA and IL1B. Regulates cranial suture patterning and fusion. Activates transcription as a heterodimer with E proteins. Regulates gene expression differentially, depending on dimer composition. Homodimers induce expression of FGFR2 and POSTN while heterodimers repress FGFR2 and POSTN expression and induce THBS1 expression. Heterodimerization is also required for osteoblast differentiation. Represses the activity of the circadian transcriptional activator: NPAS2-BMAL1 heterodimer. The protein is Twist-related protein 1 (TWIST1) of Callithrix jacchus (White-tufted-ear marmoset).